A 132-amino-acid polypeptide reads, in one-letter code: UPF0299 membrane protein YohJ (132 aa).

Over 1-6 (MSKTLN) the chain is Periplasmic. Residues 7–27 (IIWQYLRAFVLIYACLYAGIF) traverse the membrane as a helical segment. At 28–30 (IAS) the chain is on the cytoplasmic side. A helical membrane pass occupies residues 31–51 (LLPVTIPGSIIGMLILFVLLA). Over 52-62 (LQILPAKWVNP) the chain is Periplasmic. Residues 63 to 83 (GCYVLIRYMALLFVPIGVGVM) form a helical membrane-spanning segment. Residues 84–92 (QYFDLLRAQ) are Cytoplasmic-facing. Residues 93-113 (FGPVVVSCAISTLVVFLVVSW) traverse the membrane as a helical segment. The Periplasmic portion of the chain corresponds to 114–132 (SSQLVHGERKVVGQKGSEE).

This sequence belongs to the UPF0299 family.

It localises to the cell inner membrane. The protein is UPF0299 membrane protein YohJ (yohJ) of Escherichia coli O157:H7.